We begin with the raw amino-acid sequence, 229 residues long: Transcriptional regulatory protein YxdJ (229 aa).

In terms of domain architecture, Response regulatory spans K3 to I116. D52 bears the 4-aspartylphosphate mark. Residues E129 to A227 constitute a DNA-binding region (ompR/PhoB-type).

In terms of processing, phosphorylated by YxdK.

The protein localises to the cytoplasm. Probable member of the two-component regulatory system YxdK/YxdJ. Positively regulates the expression of the yxdLMyxeA operon by direct interaction with its promoter region. Could also indirectly regulate the expression of the dlt operon. This chain is Transcriptional regulatory protein YxdJ (yxdJ), found in Bacillus subtilis (strain 168).